The following is a 519-amino-acid chain: Histidine--tRNA ligase (519 aa).

This sequence belongs to the class-II aminoacyl-tRNA synthetase family. In terms of assembly, homodimer.

It is found in the cytoplasm. The enzyme catalyses tRNA(His) + L-histidine + ATP = L-histidyl-tRNA(His) + AMP + diphosphate + H(+). The sequence is that of Histidine--tRNA ligase from Rhodopseudomonas palustris (strain BisB18).